The sequence spans 252 residues: Ribosomal RNA small subunit methyltransferase J (252 aa).

S-adenosyl-L-methionine contacts are provided by residues 101–102, 117–118, 153–154, and Asp171; these read RD, ER, and SS.

It belongs to the methyltransferase superfamily. RsmJ family.

Its subcellular location is the cytoplasm. The enzyme catalyses guanosine(1516) in 16S rRNA + S-adenosyl-L-methionine = N(2)-methylguanosine(1516) in 16S rRNA + S-adenosyl-L-homocysteine + H(+). In terms of biological role, specifically methylates the guanosine in position 1516 of 16S rRNA. This Salmonella typhi protein is Ribosomal RNA small subunit methyltransferase J.